A 379-amino-acid polypeptide reads, in one-letter code: Succinate--CoA ligase [ADP-forming] subunit beta (379 aa).

In terms of domain architecture, ATP-grasp spans Lys9 to Val236. ATP is bound by residues Lys46, Gly53–Gly55, Glu92, Val95, and Glu100. Residues Asn192 and Asp206 each coordinate Mg(2+). Substrate contacts are provided by residues Asn256 and Gly313 to Thr315.

It belongs to the succinate/malate CoA ligase beta subunit family. In terms of assembly, heterotetramer of two alpha and two beta subunits. Requires Mg(2+) as cofactor.

It carries out the reaction succinate + ATP + CoA = succinyl-CoA + ADP + phosphate. The catalysed reaction is GTP + succinate + CoA = succinyl-CoA + GDP + phosphate. It participates in carbohydrate metabolism; tricarboxylic acid cycle; succinate from succinyl-CoA (ligase route): step 1/1. In terms of biological role, succinyl-CoA synthetase functions in the citric acid cycle (TCA), coupling the hydrolysis of succinyl-CoA to the synthesis of either ATP or GTP and thus represents the only step of substrate-level phosphorylation in the TCA. The beta subunit provides nucleotide specificity of the enzyme and binds the substrate succinate, while the binding sites for coenzyme A and phosphate are found in the alpha subunit. The polypeptide is Succinate--CoA ligase [ADP-forming] subunit beta (Desulfurococcus amylolyticus (strain DSM 18924 / JCM 16383 / VKM B-2413 / 1221n) (Desulfurococcus kamchatkensis)).